The chain runs to 373 residues: tRNA (guanine(26)-N(2))-dimethyltransferase (373 aa).

Residues 2–365 enclose the Trm1 methyltransferase domain; the sequence is KIISEGETKL…AELSDLVVLI (364 aa). S-adenosyl-L-methionine is bound by residues Arg35, Arg66, Asp86, Asp113, and Ala114.

The protein belongs to the class I-like SAM-binding methyltransferase superfamily. Trm1 family.

The catalysed reaction is guanosine(26) in tRNA + 2 S-adenosyl-L-methionine = N(2)-dimethylguanosine(26) in tRNA + 2 S-adenosyl-L-homocysteine + 2 H(+). Its function is as follows. Dimethylates a single guanine residue at position 26 of a number of tRNAs using S-adenosyl-L-methionine as donor of the methyl groups. This chain is tRNA (guanine(26)-N(2))-dimethyltransferase, found in Methanococcus maripaludis (strain C5 / ATCC BAA-1333).